The following is a 210-amino-acid chain: Thymidylate kinase (210 aa).

Residue 11-18 (GVDGAGKT) coordinates ATP.

This sequence belongs to the thymidylate kinase family.

It catalyses the reaction dTMP + ATP = dTDP + ADP. Functionally, phosphorylation of dTMP to form dTDP in both de novo and salvage pathways of dTTP synthesis. The polypeptide is Thymidylate kinase (tmk) (Mycoplasma pneumoniae (strain ATCC 29342 / M129 / Subtype 1) (Mycoplasmoides pneumoniae)).